A 38-amino-acid polypeptide reads, in one-letter code: A2-specific pheromone (38 aa).

C35 is modified (cysteine methyl ester). C35 is lipidated: S-farnesyl cysteine. The propeptide at 36–38 (LIA) is removed in mature form.

It localises to the cell membrane. Functionally, mating pheromone for A2 allele. This is A2-specific pheromone (MFA2) from Mycosarcoma maydis (Corn smut fungus).